Consider the following 1122-residue polypeptide: Desmoglein-2 (1122 aa).

The first 28 residues, 1–28 (MARSPGDRCALLLLVQLLAVVCLDFGNG), serve as a signal peptide directing secretion. Positions 29 to 54 (LHLEVFSPRNEGKPFPKHTHLVRQKR) are excised as a propeptide. 4 consecutive Cadherin domains span residues 55–164 (AWIT…EPVF), 165–277 (TQEV…IPVV), 278–398 (ENKM…SSVV), and 397–504 (VVSF…CPVL). Residues 55 to 618 (AWITAPVALR…YDNYVGLGPA (564 aa)) lie on the Extracellular side of the membrane. N-linked (GlcNAc...) asparagine glycosylation occurs at N117. 3 N-linked (GlcNAc...) asparagine glycosylation sites follow: N314, N467, and N519. Residues 619-639 (AIALMILALLLLLLVPLLLLI) form a helical membrane-spanning segment. Residues 640 to 1122 (CHCGGGAKGF…KHSTMQHSYS (483 aa)) are Cytoplasmic-facing. S685, S706, S709, and S729 each carry phosphoserine. T808 bears the Phosphothreonine mark. 3 positions are modified to phosphoserine: S810, S814, and S819. 6 Desmoglein repeat repeats span residues 885–916 (AYSS…ESSV), 917–945 (SSRQ…SYAK), 946–971 (GSAV…ERVY), 972–995 (APTS…ERVI), 996–1024 (QPNG…ERES), and 1025–1055 (ILAP…ERIL). The segment at 913–932 (ESSVSSRQSQKVVPPPDPVA) is disordered. Over residues 914-924 (SSVSSRQSQKV) the composition is skewed to low complexity. Residues 1089-1122 (LPNLDLEESDRPNSTITTSSTRVTKHSTMQHSYS) are disordered. Polar residues predominate over residues 1100–1122 (PNSTITTSSTRVTKHSTMQHSYS). S1122 bears the Phosphoserine mark.

Interacts with PKP2. Interacts with CTNNB1; the interaction promotes localization of CTNNB1 at cell junctions thus reducing its nuclear localization and subsequent transcription of CTNNB1/TCF-target genes. Post-translationally, palmitoylated by ZDHHC5 at the plasma membrane. Expressed in undifferentiated pluripotent stem cells, expression decreases during differentiation (at protein level). Expressed by embryonic stem cells, expression is reduced during differentiation (at protein level). Expressed at the apical-lateral cell membrane of kidney tubular epithelial cells (at protein level). Expressed in epidermis and heart (at protein level). Expressed in the brain, spleen, lung, liver skeletal muscle, kidney and testis.

The protein localises to the cell membrane. The protein resides in the cell junction. It localises to the desmosome. It is found in the cytoplasm. A component of desmosome cell-cell junctions which are required for positive regulation of cellular adhesion. Involved in the interaction of plaque proteins and intermediate filaments mediating cell-cell adhesion. Required for proliferation and viability of embryonic stem cells in the blastocyst, thereby crucial for progression of post-implantation embryonic development. Maintains pluripotency by regulating epithelial to mesenchymal transition/mesenchymal to epithelial transition (EMT/MET) via interacting with and sequestering CTNNB1 to sites of cell-cell contact, thereby reducing translocation of CTNNB1 to the nucleus and subsequent transcription of CTNNB1/TCF-target genes. Promotes pluripotency and the multi-lineage differentiation potential of hematopoietic stem cells. Plays a role in endothelial cell sprouting and elongation via mediating the junctional-association of cortical actin fibers and CDH5. Plays a role in limiting inflammatory infiltration and the apoptotic response to injury in kidney tubular epithelial cells, potentially via its role in maintaining cell-cell adhesion and the epithelial barrier. The polypeptide is Desmoglein-2 (Dsg2) (Mus musculus (Mouse)).